The sequence spans 118 residues: Basic phospholipase A2 PA-5 (118 aa).

7 disulfides stabilise this stretch: Cys-11–Cys-71, Cys-27–Cys-117, Cys-29–Cys-45, Cys-44–Cys-98, Cys-51–Cys-91, Cys-60–Cys-84, and Cys-78–Cys-89. Residues Tyr-28, Gly-30, and Gly-32 each coordinate Ca(2+). His-48 is a catalytic residue. Asp-49 contributes to the Ca(2+) binding site. Asp-92 is a catalytic residue.

It belongs to the phospholipase A2 family. Group I subfamily. D49 sub-subfamily. Ca(2+) serves as cofactor. In terms of tissue distribution, expressed by the venom gland.

The protein localises to the secreted. The catalysed reaction is a 1,2-diacyl-sn-glycero-3-phosphocholine + H2O = a 1-acyl-sn-glycero-3-phosphocholine + a fatty acid + H(+). Functionally, PLA2 catalyzes the calcium-dependent hydrolysis of the 2-acyl groups in 3-sn-phosphoglycerides. This chain is Basic phospholipase A2 PA-5, found in Pseudechis australis (Mulga snake).